The sequence spans 476 residues: Bifunctional protein HldE (476 aa).

A ribokinase region spans residues 1 to 319 (MKVSLPAFEK…EALALHHGES (319 aa)). 195–198 (NMSE) contributes to the ATP binding site. Aspartate 264 is an active-site residue. A cytidylyltransferase region spans residues 345-476 (MTNGCFDILH…AIIQNIMANQ (132 aa)).

It in the N-terminal section; belongs to the carbohydrate kinase PfkB family. The protein in the C-terminal section; belongs to the cytidylyltransferase family. Homodimer.

The enzyme catalyses D-glycero-beta-D-manno-heptose 7-phosphate + ATP = D-glycero-beta-D-manno-heptose 1,7-bisphosphate + ADP + H(+). It carries out the reaction D-glycero-beta-D-manno-heptose 1-phosphate + ATP + H(+) = ADP-D-glycero-beta-D-manno-heptose + diphosphate. It participates in nucleotide-sugar biosynthesis; ADP-L-glycero-beta-D-manno-heptose biosynthesis; ADP-L-glycero-beta-D-manno-heptose from D-glycero-beta-D-manno-heptose 7-phosphate: step 1/4. The protein operates within nucleotide-sugar biosynthesis; ADP-L-glycero-beta-D-manno-heptose biosynthesis; ADP-L-glycero-beta-D-manno-heptose from D-glycero-beta-D-manno-heptose 7-phosphate: step 3/4. Catalyzes the phosphorylation of D-glycero-D-manno-heptose 7-phosphate at the C-1 position to selectively form D-glycero-beta-D-manno-heptose-1,7-bisphosphate. In terms of biological role, catalyzes the ADP transfer from ATP to D-glycero-beta-D-manno-heptose 1-phosphate, yielding ADP-D-glycero-beta-D-manno-heptose. The chain is Bifunctional protein HldE from Shewanella baltica (strain OS155 / ATCC BAA-1091).